The following is a 273-amino-acid chain: MMKRQFEDVTRIVIKIGTSSLVLPTGKINLEKIDQLAFVISSLMNKGKEVILVSSGAMGFGLDILKMEKRPTNLAKQQAVSSVGQVAMMSLYSQIFAHYQTNVSQILLTRDVVVFPESLANVTNAFESLISFGIVPIVNENDAVSVDEMDHATKFGDNDRLSAVVAGITKADLLIMLSDIDGLFDKNPTIYEDAQLRSHVAVITQEIIASAGGAGSKFGTGGMLSKIQSAQMVFENKGQMVLMNGANPRDILRVLEGQPLGTWFKQIEEVRHD.

Lys15 provides a ligand contact to ATP. Residues Ser55, Asp142, and Asn158 each coordinate substrate. ATP is bound by residues 178 to 179 and 220 to 226; these read SD and TGGMLSK.

Belongs to the glutamate 5-kinase family.

The protein resides in the cytoplasm. The catalysed reaction is L-glutamate + ATP = L-glutamyl 5-phosphate + ADP. It functions in the pathway amino-acid biosynthesis; L-proline biosynthesis; L-glutamate 5-semialdehyde from L-glutamate: step 1/2. In terms of biological role, catalyzes the transfer of a phosphate group to glutamate to form L-glutamate 5-phosphate. In Streptococcus pyogenes serotype M3 (strain ATCC BAA-595 / MGAS315), this protein is Glutamate 5-kinase.